Consider the following 95-residue polypeptide: MSFVFQAEVRSDLGKGASRRLRHADQVPAIIYGAGKEAQSITVDHKKFIIAQEKPEFYESVLTLVINGEEVNVKVKAIQRHPVKPKLVHLDFVRV.

This sequence belongs to the bacterial ribosomal protein bL25 family. Part of the 50S ribosomal subunit; part of the 5S rRNA/L5/L18/L25 subcomplex. Contacts the 5S rRNA. Binds to the 5S rRNA independently of L5 and L18.

This is one of the proteins that binds to the 5S RNA in the ribosome where it forms part of the central protuberance. In Aeromonas salmonicida (strain A449), this protein is Large ribosomal subunit protein bL25.